We begin with the raw amino-acid sequence, 241 residues long: Ribose-5-phosphate isomerase A (241 aa).

Residues 29–32 (TGTT), 84–87 (DGAD), and 97–100 (KGGG) contribute to the substrate site. Residue Glu-106 is the Proton acceptor of the active site. A substrate-binding site is contributed by Lys-124.

This sequence belongs to the ribose 5-phosphate isomerase family. As to quaternary structure, homodimer.

The enzyme catalyses aldehydo-D-ribose 5-phosphate = D-ribulose 5-phosphate. It functions in the pathway carbohydrate degradation; pentose phosphate pathway; D-ribose 5-phosphate from D-ribulose 5-phosphate (non-oxidative stage): step 1/1. Functionally, catalyzes the reversible conversion of ribose-5-phosphate to ribulose 5-phosphate. The protein is Ribose-5-phosphate isomerase A of Thermoplasma acidophilum (strain ATCC 25905 / DSM 1728 / JCM 9062 / NBRC 15155 / AMRC-C165).